Reading from the N-terminus, the 172-residue chain is Large ribosomal subunit protein uL16 (172 aa).

It belongs to the universal ribosomal protein uL16 family.

The polypeptide is Large ribosomal subunit protein uL16 (Methanocella arvoryzae (strain DSM 22066 / NBRC 105507 / MRE50)).